A 392-amino-acid chain; its full sequence is Digeranylgeranylglycerophospholipid reductase (392 aa).

FAD-binding residues include G15, E34, C45, A46, G48, R99, A123, D279, G291, and I292. Residue V370 participates in a 2,3-bis-O-(geranylgeranyl)-sn-glycerol 1-phospholipid binding.

This sequence belongs to the geranylgeranyl reductase family. DGGGPL reductase subfamily. FAD is required as a cofactor.

It carries out the reaction a 2,3-bis-O-phytanyl-sn-glycerol 1-phospholipid + 8 oxidized 2[4Fe-4S]-[ferredoxin] = a 2,3-bis-O-(geranylgeranyl)-sn-glycerol 1-phospholipid + 8 reduced 2[4Fe-4S]-[ferredoxin] + 16 H(+). The catalysed reaction is 2,3-bis-O-(phytanyl)-sn-glycerol 1-phosphate + 8 oxidized 2[4Fe-4S]-[ferredoxin] = 2,3-bis-O-(geranylgeranyl)-sn-glycerol 1-phosphate + 8 reduced 2[4Fe-4S]-[ferredoxin] + 16 H(+). The enzyme catalyses a 2,3-bis-O-phytanyl-sn-glycerol 1-phospholipid + 8 A = a 2,3-bis-O-(geranylgeranyl)-sn-glycerol 1-phospholipid + 8 AH2. It catalyses the reaction CDP-2,3-bis-O-(geranylgeranyl)-sn-glycerol + 8 AH2 = CDP-2,3-bis-O-(phytanyl)-sn-glycerol + 8 A. It carries out the reaction archaetidylserine + 8 AH2 = 2,3-bis-O-phytanyl-sn-glycero-3-phospho-L-serine + 8 A. It functions in the pathway membrane lipid metabolism; glycerophospholipid metabolism. In terms of biological role, is involved in the reduction of 2,3-digeranylgeranylglycerophospholipids (unsaturated archaeols) into 2,3-diphytanylglycerophospholipids (saturated archaeols) in the biosynthesis of archaeal membrane lipids. Catalyzes the formation of archaetidic acid (2,3-di-O-phytanyl-sn-glyceryl phosphate) from 2,3-di-O-geranylgeranylglyceryl phosphate (DGGGP) via the hydrogenation of each double bond of the isoprenoid chains. Is also probably able to reduce double bonds of geranyl groups in CDP-2,3-bis-O-(geranylgeranyl)-sn-glycerol and archaetidylserine, thus acting at various stages in the biosynthesis of archaeal membrane lipids. The protein is Digeranylgeranylglycerophospholipid reductase of Methanocella arvoryzae (strain DSM 22066 / NBRC 105507 / MRE50).